Consider the following 1140-residue polypeptide: Chromosome partition protein Smc (1140 aa).

Residue 34–41 participates in ATP binding; that stretch reads PNGSGKSN. Residues 160–484 adopt a coiled-coil conformation; the sequence is VDQFDSEIER…EKEASAKIAS (325 aa). The SMC hinge domain occupies 502–619; it reads EGVIGLVRDL…VQDIDAGRRL (118 aa). Positions 660–990 form a coiled coil; sequence LEGMKIQLSS…MLNEKKREVF (331 aa).

Belongs to the SMC family. In terms of assembly, homodimer.

The protein resides in the cytoplasm. Functionally, required for chromosome condensation and partitioning. The polypeptide is Chromosome partition protein Smc (Thermoplasma acidophilum (strain ATCC 25905 / DSM 1728 / JCM 9062 / NBRC 15155 / AMRC-C165)).